Here is a 243-residue protein sequence, read N- to C-terminus: MSEMIYGIHAVQALLERAPERFQEVFILKGREDKRLLPLIHALESQGVVIQLANRQYLDEKSDGAVHQGIIARVKPGRQYQENDLPDLIASLDQPFLLILDGVTDPHNLGACLRSADAAGVHAVIVPKDRSAQLNATAKKVACGAAESVPLIRVTNLARTMRMLQEENIWIVGTAGEADHTLYQSKMTGRLALVMGAEGEGMRRLTREHCDELISIPMAGSVSSLNVSVATGICLFEAVRQRS.

3 residues coordinate S-adenosyl-L-methionine: glycine 196, isoleucine 216, and leucine 225.

The protein belongs to the class IV-like SAM-binding methyltransferase superfamily. RNA methyltransferase TrmH family. RlmB subfamily. Homodimer.

The protein localises to the cytoplasm. The catalysed reaction is guanosine(2251) in 23S rRNA + S-adenosyl-L-methionine = 2'-O-methylguanosine(2251) in 23S rRNA + S-adenosyl-L-homocysteine + H(+). Its function is as follows. Specifically methylates the ribose of guanosine 2251 in 23S rRNA. In Shigella flexneri, this protein is 23S rRNA (guanosine-2'-O-)-methyltransferase RlmB.